We begin with the raw amino-acid sequence, 1066 residues long: Thyrotropin-releasing hormone-degrading ectoenzyme (1066 aa).

The span at 1 to 14 (MALDGERGEQEEEK) shows a compositional bias: basic and acidic residues. Residues 1 to 43 (MALDGERGEQEEEKKKKKKKKKRKKKEEEGAEKSSSPFAATMG) form a disordered region. At 1–81 (MALDGERGEQ…ERHIAVHKRL (81 aa)) the chain is on the cytoplasmic side. Residues 15–25 (KKKKKKKKRKK) are compositionally biased toward basic residues. Position 71 is a phosphothreonine; by PKC (T71). Residues 82-102 (VLAFAVSIVALLAVTMLAVLL) form a helical; Signal-anchor for type II membrane protein membrane-spanning segment. The Extracellular portion of the chain corresponds to 103-1066 (SLRFDECGAS…FQWLGKAMRH (964 aa)). The disordered stretch occupies residues 117 to 177 (GTDGGLGGFP…SEEEQEQWQP (61 aa)). Positions 118-127 (TDGGLGGFPE) are enriched in gly residues. N131 is a glycosylation site (N-linked (GlcNAc...) asparagine). A compositionally biased stretch (basic and acidic residues) spans 143–154 (HAGEESSQREIG). N-linked (GlcNAc...) asparagine glycosylation is found at N202, N217, N264, and N380. A substrate-binding site is contributed by 446–450 (AAMEN). H482 lines the Zn(2+) pocket. The Proton acceptor role is filled by E483. Residues H486 and E505 each contribute to the Zn(2+) site. 7 N-linked (GlcNAc...) asparagine glycosylation sites follow: N647, N676, N691, N705, N726, N842, and N948.

The protein belongs to the peptidase M1 family. Homodimer; disulfide-linked. Zn(2+) serves as cofactor. In terms of tissue distribution, predominantly expressed in brain and pituitary. Lower levels in lung and liver.

It localises to the membrane. It catalyses the reaction Release of the N-terminal pyroglutamyl group from pGlu-|-His-Xaa tripeptides and pGlu-|-His-Xaa-Gly tetrapeptides.. In terms of biological role, specific inactivation of TRH after its release. This is Thyrotropin-releasing hormone-degrading ectoenzyme (Trhde) from Rattus norvegicus (Rat).